We begin with the raw amino-acid sequence, 355 residues long: Probable butyrate kinase (355 aa).

It belongs to the acetokinase family.

It is found in the cytoplasm. It carries out the reaction butanoate + ATP = butanoyl phosphate + ADP. In Listeria monocytogenes serovar 1/2a (strain ATCC BAA-679 / EGD-e), this protein is Probable butyrate kinase.